Consider the following 227-residue polypeptide: tRNA (guanine-N(1)-)-methyltransferase (227 aa).

S-adenosyl-L-methionine contacts are provided by residues Gly112 and 132–137 (LGDFVL).

Belongs to the RNA methyltransferase TrmD family. In terms of assembly, homodimer.

The protein localises to the cytoplasm. The enzyme catalyses guanosine(37) in tRNA + S-adenosyl-L-methionine = N(1)-methylguanosine(37) in tRNA + S-adenosyl-L-homocysteine + H(+). In terms of biological role, specifically methylates guanosine-37 in various tRNAs. The sequence is that of tRNA (guanine-N(1)-)-methyltransferase from Gloeobacter violaceus (strain ATCC 29082 / PCC 7421).